A 190-amino-acid chain; its full sequence is Small ribosomal subunit protein eS7 (190 aa).

The protein belongs to the eukaryotic ribosomal protein eS7 family.

The sequence is that of Small ribosomal subunit protein eS7 (RpS7) from Manduca sexta (Tobacco hawkmoth).